The sequence spans 136 residues: Large ribosomal subunit protein uL16 (136 aa).

This sequence belongs to the universal ribosomal protein uL16 family. Part of the 50S ribosomal subunit.

Functionally, binds 23S rRNA and is also seen to make contacts with the A and possibly P site tRNAs. This is Large ribosomal subunit protein uL16 from Rickettsia massiliae (strain Mtu5).